Reading from the N-terminus, the 78-residue chain is uncharacterized protein (78 aa).

Residues 58–78 (EANDPEKKIPSTAAKAISLSP) are disordered.

This is an uncharacterized protein from Vaccinia virus (strain Copenhagen) (VACV).